The sequence spans 227 residues: Peptidyl-tRNA hydrolase (227 aa).

A tRNA-binding site is contributed by Tyr14. Residue His19 is the Proton acceptor of the active site. 3 residues coordinate tRNA: Phe64, Asn66, and Asn112. Positions 182 to 227 (RIALLTQPPKPPKPPKPPKDGAKETAGKGTEAETAKPPGPAAGRTG) are disordered. Basic and acidic residues predominate over residues 198 to 215 (PPKDGAKETAGKGTEAET).

This sequence belongs to the PTH family. As to quaternary structure, monomer.

It localises to the cytoplasm. It carries out the reaction an N-acyl-L-alpha-aminoacyl-tRNA + H2O = an N-acyl-L-amino acid + a tRNA + H(+). Hydrolyzes ribosome-free peptidyl-tRNAs (with 1 or more amino acids incorporated), which drop off the ribosome during protein synthesis, or as a result of ribosome stalling. Its function is as follows. Catalyzes the release of premature peptidyl moieties from peptidyl-tRNA molecules trapped in stalled 50S ribosomal subunits, and thus maintains levels of free tRNAs and 50S ribosomes. The polypeptide is Peptidyl-tRNA hydrolase (Rhodospirillum centenum (strain ATCC 51521 / SW)).